The chain runs to 356 residues: MTSSVSTMHNNQDQQTTQLDFITLGIESSCDETGIGLYHSELGLIGHELFSSVKIHAEYGGVVPELASRDHIQRVLPLIKAVLADVKFTLQDLSGIAYTAGPGLAGALLVGCAVAKSLAWSLDIPSLAVHHMEGHLLTPLLEESQPEFPFVALLVSGGHTMLIDVKAIGQYKILGESLDDAVGEAFDKTAKILGLGYPGGPALAMLAEQGNYGAFKFPCPMVGRPGLDFSFSGLKTFVRNTFAKYPSKKEDIAKAFEVATTQTLMIKCRRALEQTKYATLVVAGGVSANLSLRKKLNQMGQKLDVNVFYPRQEFCTDNGAMIALVGYFRLSHGQHDTHHEINIKPRWSLEELSQIE.

Residues His-131 and His-135 each contribute to the Fe cation site. Residues 154 to 158, Asp-187, Gly-200, and Asn-289 contribute to the substrate site; that span reads LVSGG. Residue Asp-317 participates in Fe cation binding.

Belongs to the KAE1 / TsaD family. Fe(2+) is required as a cofactor.

It is found in the cytoplasm. It catalyses the reaction L-threonylcarbamoyladenylate + adenosine(37) in tRNA = N(6)-L-threonylcarbamoyladenosine(37) in tRNA + AMP + H(+). Its function is as follows. Required for the formation of a threonylcarbamoyl group on adenosine at position 37 (t(6)A37) in tRNAs that read codons beginning with adenine. Is involved in the transfer of the threonylcarbamoyl moiety of threonylcarbamoyl-AMP (TC-AMP) to the N6 group of A37, together with TsaE and TsaB. TsaD likely plays a direct catalytic role in this reaction. The polypeptide is tRNA N6-adenosine threonylcarbamoyltransferase (Ruthia magnifica subsp. Calyptogena magnifica).